Consider the following 331-residue polypeptide: MSGQPMAGRDGARLESFLEMMSAERGAAANTLSSYEHDLADLREFLGRRGQSLTEAQTPDLSAYLTHLAAQGFAATSQARRLSSMRQFYRFLYSEGLRGDDPTGIIDAPRKGLALPKTMSVADVNRLLGLAAQEAATEGPGQLARIRMHLLLELLYATGMRVSELVSLPVKVLRQEGRFLMIRGKGNKDRMVLLSRAAIEAMEKYEAGRKALSQEKSKAAASQKKTDTAESPWLFPSNSKEGHLPRQVFARDLKDIAIRAGLTASAVSPHVLRHAFASHLLQNGADLRAVQELLGHSDISTTQIYTHVLEERLQELVQTHHPLAKQGKNLD.

One can recognise a Core-binding (CB) domain in the interval 8–93 (GRDGARLESF…SMRQFYRFLY (86 aa)). A Tyr recombinase domain is found at 114 to 318 (ALPKTMSVAD…LEERLQELVQ (205 aa)). Active-site residues include Arg161 and Lys185. Over residues 214–228 (QEKSKAAASQKKTDT) the composition is skewed to basic and acidic residues. The interval 214–239 (QEKSKAAASQKKTDTAESPWLFPSNS) is disordered. Catalysis depends on residues His270, Arg273, and His296. Tyr305 (O-(3'-phospho-DNA)-tyrosine intermediate) is an active-site residue.

The protein belongs to the 'phage' integrase family. XerD subfamily. In terms of assembly, forms a cyclic heterotetrameric complex composed of two molecules of XerC and two molecules of XerD.

It localises to the cytoplasm. Site-specific tyrosine recombinase, which acts by catalyzing the cutting and rejoining of the recombining DNA molecules. The XerC-XerD complex is essential to convert dimers of the bacterial chromosome into monomers to permit their segregation at cell division. It also contributes to the segregational stability of plasmids. The sequence is that of Tyrosine recombinase XerD from Agrobacterium fabrum (strain C58 / ATCC 33970) (Agrobacterium tumefaciens (strain C58)).